Consider the following 825-residue polypeptide: PR domain zinc finger protein 1 (825 aa).

The SET domain occupies 84–201; the sequence is PRNLLFKYAT…ANQELLVWYC (118 aa). Residues 324–361 show a composition bias toward low complexity; sequence ITRSPIPSSTTPSPSARSSPDQSLKSSSPHSSPGNTVS. A disordered region spans residues 324–369; it reads ITRSPIPSSTTPSPSARSSPDQSLKSSSPHSSPGNTVSPVGPGSQE. The segment at 527-574 is interaction with PIAS1; it reads HVVQPKATSAAMAAPSSDEAMNLIKNKRNMTGYKTLPYPLKKQNGKIK. 4 C2H2-type zinc fingers span residues 575 to 597, 603 to 625, 631 to 653, and 659 to 681; these read YECN…LRVH, FKCQ…YLVH, HECQ…LRLH, and YQCK…KRLH. Residue lysine 816 forms a Glycyl lysine isopeptide (Lys-Gly) (interchain with G-Cter in SUMO1); alternate linkage. A Glycyl lysine isopeptide (Lys-Gly) (interchain with G-Cter in SUMO2); alternate cross-link involves residue lysine 816.

Belongs to the class V-like SAM-binding methyltransferase superfamily. In terms of assembly, interacts with PRMT5. Interacts with FBXO10. Interacts with FBXO11. Interacts with multiple nuclear sumoylation E3 ligases, including CBX4, PIAS1, PIAS2, PIAS3, PIAS4, PML and RNF4, but not RANBP2. Interacts with LDB1, SMARCD3 and SMARCC1. Interacts with EEIG1; following TNFSF11/RANKL stimulation in bone marrow-derived macrophages, the interaction promotes the binding of PRDM1/BLIMP1 to the gene promoter of IRF8. Post-translationally, sumoylation at Lys-816 by PIAS1 augments transcriptional repressor activity, and is critical for plasma cell differentiation. Can be sumoylated with SUMO1 and SUMO2 by PML. Degradation of the wild-type protein mostly depends upon sumoylation, rather than ubiquitination. Desumoylated by SENP1 and SENP6. Ubiquitinated by the SCF(FBXO11) complex, leading to its degradation by the proteasome.

It localises to the nucleus. The protein localises to the cytoplasm. Its function is as follows. Transcription factor that mediates a transcriptional program in various innate and adaptive immune tissue-resident lymphocyte T cell types such as tissue-resident memory T (Trm), natural killer (trNK) and natural killer T (NKT) cells and negatively regulates gene expression of proteins that promote the egress of tissue-resident T-cell populations from non-lymphoid organs. Plays a role in the development, retention and long-term establishment of adaptive and innate tissue-resident lymphocyte T cell types in non-lymphoid organs, such as the skin and gut, but also in other nonbarrier tissues like liver and kidney, and therefore may provide immediate immunological protection against reactivating infections or viral reinfection. Binds specifically to the PRDI element in the promoter of the beta-interferon gene. Drives the maturation of B-lymphocytes into Ig secreting cells. Associates with the transcriptional repressor ZNF683 to chromatin at gene promoter regions. Binds to the promoter and acts as a transcriptional repressor of IRF8, thereby promotes transcription of osteoclast differentiation factors such as NFATC1 and EEIG1. The polypeptide is PR domain zinc finger protein 1 (PRDM1) (Homo sapiens (Human)).